Here is a 352-residue protein sequence, read N- to C-terminus: Ribosome biogenesis protein BRX1 homolog (352 aa).

The disordered stretch occupies residues 1–47 (MAATKRKRRGDLEVQAKKPKKNRKDAGQPAKQADVAKEAEEEKDRIP). The span at 34 to 46 (DVAKEAEEEKDRI) shows a compositional bias: basic and acidic residues. Residues 59–248 (ERILIFSSRG…LIKIFQGSFG (190 aa)) enclose the Brix domain. A Glycyl lysine isopeptide (Lys-Gly) (interchain with G-Cter in SUMO2) cross-link involves residue Lys159. The residue at position 260 (Ser260) is a Phosphoserine. Lys275 carries the post-translational modification N6-acetyllysine. Positions 281–301 (QVKDVQKSRKKEPKTILPHDP) are disordered. Residues Lys313 and Lys321 each participate in a glycyl lysine isopeptide (Lys-Gly) (interchain with G-Cter in SUMO2) cross-link.

This sequence belongs to the BRX1 family.

It is found in the nucleus. Its subcellular location is the nucleolus. Required for biogenesis of the 60S ribosomal subunit. In Rattus norvegicus (Rat), this protein is Ribosome biogenesis protein BRX1 homolog (Brix1).